The chain runs to 256 residues: uncharacterized protein (256 aa).

A signal peptide spans 1–23 (MKRLNKLVLGIIFLFLVISITAG). Residue C24 is the site of N-palmitoyl cysteine attachment. A lipid anchor (S-diacylglycerol cysteine) is attached at C24.

Belongs to the staphylococcal tandem lipoprotein family.

Its subcellular location is the cell membrane. This is an uncharacterized protein from Staphylococcus aureus (strain COL).